The sequence spans 534 residues: MKLLAVRRLFRIQRVVIRYRLDDLLFALPLPWFLLAVRYVLPWRWFPRKQLELSRGARLRLALQDLGPIFIKFGQILSTRRDLLPEDIADELMLLQDRVPPFDSQQSMKLIEEQLGKKISEVFSRFDVDPLASASVAQVHAAQLKTGEEVVVKVIRPGLKPIIGQDLAWLFILARAAERFSADARLLHPVDVVADYEKTIYDELDLLREAANASQLKRNFEGSPLLYVPQVYWDWCRPKVLVMERIYGVQVTDLATLADQRTDMKMLAERGVEIFFTQVFRDSFFHADMHPGNIFVSTVNPWSPQYIAIDCGIVGSLTPEDQDYLARNLFAFFKRDYRRVAQLHIDSGWVPAETKLNEFEAAIRTVCEPIFEKPLKDISFGQVLMRLFQTARRFNMEVQPQLVLLQKTLLNIEGLGRQLYPDLDLWNTAQPFLERWMRERMSPKTVLGNLHSQMEQLPHLANMTRDLLERMSQPHAKDPAPPWKKRKDDWFLRLLGAAHLVGGVMLAIGGPLNQLGHWPAGIMVAVGVYLIVRR.

Residues 23–43 (DLLFALPLPWFLLAVRYVLPW) form a helical membrane-spanning segment. Residues 125 to 492 (RFDVDPLASA…WKKRKDDWFL (368 aa)) enclose the Protein kinase domain. Residues 131–139 (LASASVAQV) and lysine 153 each bind ATP. Aspartate 288 functions as the Proton acceptor in the catalytic mechanism. Helical transmembrane passes span 490-510 (WFLR…AIGG) and 512-532 (LNQL…YLIV).

Belongs to the ABC1 family. UbiB subfamily.

It localises to the cell inner membrane. It functions in the pathway cofactor biosynthesis; ubiquinone biosynthesis [regulation]. Is probably a protein kinase regulator of UbiI activity which is involved in aerobic coenzyme Q (ubiquinone) biosynthesis. This chain is Probable protein kinase UbiB, found in Pseudomonas fluorescens (strain SBW25).